A 350-amino-acid chain; its full sequence is MSTRLGELVERLGGRLIGDADIEVVGIAPLNDADASHITFLSNPKFRGQAAQTHAAALILSAADDEVVAADYQGARIVTANPYAYFARAAQFFAALHAHIAPAGIHPSASVDPTAQIAASASIGPFVAVEAGAVIEDGCVIDAGCFIGRDARVGSGTHFYPRVTFLAGCRIGARGIIHSGAVIGADGFGFANEGGVYIKIPQTGAVRIGDDVEIGANTSIDRGALADTVLEDGVKLDNQIQIGHNCHIGAHTAMAGCVGVAGSAIIGKYCTFGGAAMVLGHLTIADHVHISSGSMVSRSIREPGQYTGFYPLAKNAEWEKSAVIVRNLATMREKIRELEKTIKSLGDKPE.

Catalysis depends on His-244, which acts as the Proton acceptor.

It belongs to the transferase hexapeptide repeat family. LpxD subfamily. As to quaternary structure, homotrimer.

The enzyme catalyses a UDP-3-O-[(3R)-3-hydroxyacyl]-alpha-D-glucosamine + a (3R)-hydroxyacyl-[ACP] = a UDP-2-N,3-O-bis[(3R)-3-hydroxyacyl]-alpha-D-glucosamine + holo-[ACP] + H(+). It participates in bacterial outer membrane biogenesis; LPS lipid A biosynthesis. Functionally, catalyzes the N-acylation of UDP-3-O-acylglucosamine using 3-hydroxyacyl-ACP as the acyl donor. Is involved in the biosynthesis of lipid A, a phosphorylated glycolipid that anchors the lipopolysaccharide to the outer membrane of the cell. The polypeptide is UDP-3-O-acylglucosamine N-acyltransferase (Janthinobacterium sp. (strain Marseille) (Minibacterium massiliensis)).